The sequence spans 170 residues: Extracellular globin-3 (170 aa).

Positions 1–17 (MLRQLLVLVGLAVVCLA) are cleaved as a signal peptide. The Globin domain maps to 23–169 (CCSEEDHRIV…ILTKISSRLN (147 aa)). A disulfide bridge links cysteine 24 with cysteine 156. Residue histidine 119 participates in heme b binding.

It belongs to the globin family. In terms of assembly, the extracellular hemoglobin of the earthworm consists of 12 subunits that have a hexagonal bilayer structure with a molecular weight near 3.8 million. Each one-twelfth subunit is composed primarily of disulfide linked trimers (chains A, B, and C) and monomers (chain D).

It is found in the secreted. This Lumbricus terrestris (Common earthworm) protein is Extracellular globin-3.